Here is a 192-residue protein sequence, read N- to C-terminus: Large ribosomal subunit protein bL9 (192 aa).

The tract at residues 173 to 192 (ALRPEDFFDPEADGLDENEA) is disordered. Positions 179-192 (FFDPEADGLDENEA) are enriched in acidic residues.

Belongs to the bacterial ribosomal protein bL9 family.

Functionally, binds to the 23S rRNA. The protein is Large ribosomal subunit protein bL9 of Rhizobium etli (strain ATCC 51251 / DSM 11541 / JCM 21823 / NBRC 15573 / CFN 42).